The primary structure comprises 321 residues: Ribose-phosphate pyrophosphokinase (321 aa).

Residues Asp44–Glu46 and Arg103–Gln104 each bind ATP. Residues His137 and Asp179 each contribute to the Mg(2+) site. The active site involves Lys202. D-ribose 5-phosphate-binding positions include Arg204, Asp228, and Asp232–Thr236.

Belongs to the ribose-phosphate pyrophosphokinase family. Class I subfamily. As to quaternary structure, homohexamer. Requires Mg(2+) as cofactor.

It is found in the cytoplasm. The catalysed reaction is D-ribose 5-phosphate + ATP = 5-phospho-alpha-D-ribose 1-diphosphate + AMP + H(+). Its pathway is metabolic intermediate biosynthesis; 5-phospho-alpha-D-ribose 1-diphosphate biosynthesis; 5-phospho-alpha-D-ribose 1-diphosphate from D-ribose 5-phosphate (route I): step 1/1. Involved in the biosynthesis of the central metabolite phospho-alpha-D-ribosyl-1-pyrophosphate (PRPP) via the transfer of pyrophosphoryl group from ATP to 1-hydroxyl of ribose-5-phosphate (Rib-5-P). The polypeptide is Ribose-phosphate pyrophosphokinase (Staphylococcus epidermidis (strain ATCC 35984 / DSM 28319 / BCRC 17069 / CCUG 31568 / BM 3577 / RP62A)).